Consider the following 344-residue polypeptide: MHCPICHHRAHVVYCAHCINTSPSLLLKLKLDLILLKDENKELNGKVEQILNEAMNYDQLDIKRMEKKKDPLMNSLMKLDVLRMKKNNNLIRHRIEQLNERIYSKRNHISELKVEIDNYKCYKVGTGTDKLIEQVEISDAKNKLAQVSKICESVRDYKLNLLNNWFVIQKLQDNFQIPFAIAFQPLISLKNFRVLPLAITNDSINIMWKYISFFSDILMIKLPYTNKICEQPMFEFSDSIQTVVQRLIKLIINILQICRHLKLVPSTPMDIPWLLDQYDVDGLFYNMVKRNKMKCRSVSLYWTFGMLYSMVLDNMNNPQRGHPARRTAPPPTVTGPHDRWYVVG.

Residues cysteine 3–cysteine 18 form a cysteine repeats region. Residues leucine 26–aspartate 156 adopt a coiled-coil conformation.

This sequence belongs to the ATG14 family. In terms of assembly, component of the autophagy-specific VPS34 PI3-kinase complex I composed of VPS15, VPS30, VPS34 and ATG14.

Its subcellular location is the preautophagosomal structure membrane. It localises to the vacuole membrane. In terms of biological role, required for cytoplasm to vacuole transport (Cvt) and autophagy as a part of the autophagy-specific VPS34 PI3-kinase complex I. This complex is essential to recruit the ATG8-phosphatidylinositol conjugate and the ATG12-ATG5 conjugate to the pre-autophagosomal structure. ATG14 mediates the specific binding of the VPS34 PI3-kinase complex I to the preautophagosomal structure (PAS). The sequence is that of Autophagy-related protein 14 (ATG14) from Saccharomyces cerevisiae (strain YJM789) (Baker's yeast).